We begin with the raw amino-acid sequence, 260 residues long: 2-oxo-tetronate isomerase (260 aa).

Glutamate 143 functions as the Proton donor/acceptor in the catalytic mechanism. Mg(2+) contacts are provided by glutamate 143, aspartate 178, glutamine 204, and glutamate 240. Glutamate 240 (proton donor/acceptor) is an active-site residue.

This sequence belongs to the hyi family. OtnI subfamily.

It carries out the reaction 2-dehydro-L-erythronate = 3-dehydro-L-erythronate. The catalysed reaction is 2-dehydro-D-erythronate = 3-dehydro-D-erythronate. Its function is as follows. Catalyzes the isomerization of 2-oxo-tetronate to 3-oxo-tetronate. This chain is 2-oxo-tetronate isomerase, found in Cupriavidus necator (strain ATCC 17699 / DSM 428 / KCTC 22496 / NCIMB 10442 / H16 / Stanier 337) (Ralstonia eutropha).